Here is a 445-residue protein sequence, read N- to C-terminus: Gamma-glutamyl phosphate reductase (445 aa).

It belongs to the gamma-glutamyl phosphate reductase family.

It is found in the cytoplasm. The catalysed reaction is L-glutamate 5-semialdehyde + phosphate + NADP(+) = L-glutamyl 5-phosphate + NADPH + H(+). Its pathway is amino-acid biosynthesis; L-proline biosynthesis; L-glutamate 5-semialdehyde from L-glutamate: step 2/2. Its function is as follows. Catalyzes the NADPH-dependent reduction of L-glutamate 5-phosphate into L-glutamate 5-semialdehyde and phosphate. The product spontaneously undergoes cyclization to form 1-pyrroline-5-carboxylate. In Synechococcus sp. (strain RCC307), this protein is Gamma-glutamyl phosphate reductase.